Consider the following 1218-residue polypeptide: Cytosolic carboxypeptidase 1 (1218 aa).

2 disordered regions span residues 476–512 (VVMKERASPKGEEAKEDPKGHDRTLPQQLGGQSRVAP) and 590–617 (TEDDEDTESHSSTEQAPSVEASDGPTLH). Over residues 477-499 (VMKERASPKGEEAKEDPKGHDRT) the composition is skewed to basic and acidic residues. One can recognise a Peptidase M14 domain in the interval 840–1130 (YPYTYSTLQM…KFCVGLLRLK (291 aa)). 3 residues coordinate Zn(2+): His-912, Glu-915, and His-1009. Glu-1094 acts as the Proton donor/acceptor in catalysis. A Phosphoserine modification is found at Ser-1160. The disordered stretch occupies residues 1193-1218 (ENTGDYEPSAQEEALSDSEVSRTHLI).

The protein belongs to the peptidase M14 family. In terms of assembly, interacts with MYLK. Zn(2+) serves as cofactor. Widely expressed. Highly expressed in the cerebellum and cortex of adult mouse brain. Expressed at similar levels in both the cerebellum and the cortex throughout all developmental stages. Also expressed in sciatic nerve transection, spinal motor neurons undergoing axon regeneration, testis, heart, eye, lung, pancreas, intestine, stomach, pituitary, spleen, adrenal, kidney and in developing brain. Expression in cranial motor nuclei is the same as that observed in uninjured primary motor neurons. Expression is prevalent in sensory neurons and hippocampal CA3 neurons in addition to regenerating motor neurons.

The protein resides in the cytoplasm. It is found in the cytosol. Its subcellular location is the nucleus. It localises to the mitochondrion. It catalyses the reaction (L-glutamyl)(n+1)-gamma-L-glutamyl-L-glutamyl-[protein] + H2O = (L-glutamyl)(n)-gamma-L-glutamyl-L-glutamyl-[protein] + L-glutamate. The enzyme catalyses C-terminal L-alpha-aminoacyl-L-glutamyl-L-glutamyl-[tubulin] + H2O = C-terminal L-alpha-aminoacyl-L-glutamyl-[tubulin] + L-glutamate. In terms of biological role, metallocarboxypeptidase that mediates protein deglutamylation of tubulin and non-tubulin target proteins. Catalyzes the removal of polyglutamate side chains present on the gamma-carboxyl group of glutamate residues within the C-terminal tail of alpha- and beta-tubulin. Specifically cleaves tubulin long-side-chains, while it is not able to remove the branching point glutamate. Also catalyzes the removal of polyglutamate residues from the carboxy-terminus of alpha-tubulin as well as non-tubulin proteins such as MYLK. Involved in KLF4 deglutamylation which promotes KLF4 proteasome-mediated degradation, thereby negatively regulating cell pluripotency maintenance and embryogenesis. In Mus musculus (Mouse), this protein is Cytosolic carboxypeptidase 1.